A 647-amino-acid polypeptide reads, in one-letter code: Acetyl-coenzyme A synthetase (647 aa).

Residues R190–R193 and T310 contribute to the CoA site. ATP contacts are provided by residues G386–P388, D410–T415, D499, and R514. S522 contributes to the CoA binding site. R525 lines the ATP pocket. V536, H538, and V541 together coordinate Mg(2+). R583 serves as a coordination point for CoA. K608 carries the post-translational modification N6-acetyllysine.

This sequence belongs to the ATP-dependent AMP-binding enzyme family. The cofactor is Mg(2+). Acetylated. Deacetylation by the SIR2-homolog deacetylase activates the enzyme.

The catalysed reaction is acetate + ATP + CoA = acetyl-CoA + AMP + diphosphate. Functionally, catalyzes the conversion of acetate into acetyl-CoA (AcCoA), an essential intermediate at the junction of anabolic and catabolic pathways. AcsA undergoes a two-step reaction. In the first half reaction, AcsA combines acetate with ATP to form acetyl-adenylate (AcAMP) intermediate. In the second half reaction, it can then transfer the acetyl group from AcAMP to the sulfhydryl group of CoA, forming the product AcCoA. This chain is Acetyl-coenzyme A synthetase, found in Xylella fastidiosa (strain 9a5c).